A 122-amino-acid chain; its full sequence is Large ribosomal subunit protein bL12 (122 aa).

This sequence belongs to the bacterial ribosomal protein bL12 family. Homodimer. Part of the ribosomal stalk of the 50S ribosomal subunit. Forms a multimeric L10(L12)X complex, where L10 forms an elongated spine to which 2 to 4 L12 dimers bind in a sequential fashion. Binds GTP-bound translation factors.

In terms of biological role, forms part of the ribosomal stalk which helps the ribosome interact with GTP-bound translation factors. Is thus essential for accurate translation. In Shewanella woodyi (strain ATCC 51908 / MS32), this protein is Large ribosomal subunit protein bL12.